A 261-amino-acid chain; its full sequence is Urease accessory protein UreD (261 aa).

It belongs to the UreD family. As to quaternary structure, ureD, UreF and UreG form a complex that acts as a GTP-hydrolysis-dependent molecular chaperone, activating the urease apoprotein by helping to assemble the nickel containing metallocenter of UreC. The UreE protein probably delivers the nickel.

Its subcellular location is the cytoplasm. Functionally, required for maturation of urease via the functional incorporation of the urease nickel metallocenter. This is Urease accessory protein UreD from Haemophilus influenzae (strain ATCC 51907 / DSM 11121 / KW20 / Rd).